Consider the following 957-residue polypeptide: Glycine dehydrogenase (decarboxylating) (957 aa).

The residue at position 708 (lysine 708) is an N6-(pyridoxal phosphate)lysine.

The protein belongs to the GcvP family. As to quaternary structure, the glycine cleavage system is composed of four proteins: P, T, L and H. The cofactor is pyridoxal 5'-phosphate.

It carries out the reaction N(6)-[(R)-lipoyl]-L-lysyl-[glycine-cleavage complex H protein] + glycine + H(+) = N(6)-[(R)-S(8)-aminomethyldihydrolipoyl]-L-lysyl-[glycine-cleavage complex H protein] + CO2. In terms of biological role, the glycine cleavage system catalyzes the degradation of glycine. The P protein binds the alpha-amino group of glycine through its pyridoxal phosphate cofactor; CO(2) is released and the remaining methylamine moiety is then transferred to the lipoamide cofactor of the H protein. The chain is Glycine dehydrogenase (decarboxylating) from Escherichia coli O8 (strain IAI1).